The chain runs to 20 residues: Protein PR-L2 (20 aa).

The interval serine 1 to lysine 20 is disordered.

This sequence belongs to the BetVI family.

In Lupinus luteus (European yellow lupine), this protein is Protein PR-L2.